The following is a 1666-amino-acid chain: Atrochrysone carboxylic acid synthase PKS4 (1666 aa).

The Ketosynthase family 3 (KS3) domain maps to 15–452; it reads FEPIAIVGIG…GNAGFMVIEE (438 aa). Active-site for beta-ketoacyl synthase activity residues include cysteine 194, histidine 332, and histidine 372. Residues 555 to 863 form a malonyl-CoA:ACP transacylase (MAT) domain region; that stretch reads AFCFSGQGGE…WMTALDALMR (309 aa). Catalysis depends on serine 632, which acts as the For acyl/malonyl transferase activity. Residues 905–1034 are N-terminal hotdog fold; the sequence is REVKASSTML…EQDLLESLSL (130 aa). A PKS/mFAS DH domain is found at 905–1206; the sequence is REVKASSTML…MAKMKIYVLK (302 aa). A product template (PT) domain region spans residues 935–1203; the sequence is LLNHVMAGYT…DVRMAKMKIY (269 aa). The interval 1050 to 1206 is C-terminal hotdog fold; sequence STDVLRKELA…MAKMKIYVLK (157 aa). Position 1269 is an O-(pantetheine 4'-phosphoryl)serine (serine 1269). One can recognise a Carrier domain in the interval 1331–1395; the sequence is ATSPSLPIMP…TSTEPSQTLV (65 aa). The proline-rich linker region stretch occupies residues 1334–1397; sequence PSLPIMPNGV…TEPSQTLVAN (64 aa). The segment at 1444-1529 is alpha/beta hydrolase superfamily-type thioesterase (TE) domain; the sequence is TVIGIHCPGL…PPGVVGLTAQ (86 aa).

The enzyme catalyses holo-[ACP] + 8 malonyl-CoA + 8 H(+) = atrochrysone carboxyl-[ACP] + 8 CO2 + 8 CoA + 2 H2O. It participates in secondary metabolite biosynthesis. Functionally, non-reducing polyketide synthase that synthesizes the universal anthraquinone precursor atrochrysone carboxylic acid from malonyl-CoA. Produces a mixture of both 3R and 3S enantiomers with an excess of the 3S form. PKS4 catalyzes both hepta- and octaketide synthesis and also yields 6-hydroxymusizin, probably via carboxylating activity inherent to the KS domain. The protein is Atrochrysone carboxylic acid synthase PKS4 of Calonarius odorifer (Mushroom).